Consider the following 509-residue polypeptide: UDP-N-acetylmuramyl-tripeptide synthetase (509 aa).

124–130 (GTNGKTS) contacts ATP. Residues 164–165 (TT), Ser-191, and Arg-199 contribute to the UDP-N-acetyl-alpha-D-muramoyl-L-alanyl-D-glutamate site. Lys-231 carries the post-translational modification N6-carboxylysine.

This sequence belongs to the MurCDEF family. MurE subfamily. Post-translationally, carboxylation is probably crucial for Mg(2+) binding and, consequently, for the gamma-phosphate positioning of ATP.

The protein localises to the cytoplasm. It participates in cell wall biogenesis; peptidoglycan biosynthesis. Catalyzes the addition of an amino acid to the nucleotide precursor UDP-N-acetylmuramoyl-L-alanyl-D-glutamate (UMAG) in the biosynthesis of bacterial cell-wall peptidoglycan. The sequence is that of UDP-N-acetylmuramyl-tripeptide synthetase from Tropheryma whipplei (strain Twist) (Whipple's bacillus).